Here is a 436-residue protein sequence, read N- to C-terminus: Probable 4-aminobutyrate aminotransferase (436 aa).

The residue at position 281 (lysine 281) is an N6-(pyridoxal phosphate)lysine.

The protein belongs to the class-III pyridoxal-phosphate-dependent aminotransferase family. It depends on pyridoxal 5'-phosphate as a cofactor.

It catalyses the reaction 4-aminobutanoate + 2-oxoglutarate = succinate semialdehyde + L-glutamate. The enzyme catalyses (S)-3-amino-2-methylpropanoate + 2-oxoglutarate = 2-methyl-3-oxopropanoate + L-glutamate. It participates in amino-acid degradation; 4-aminobutanoate degradation. The sequence is that of Probable 4-aminobutyrate aminotransferase (gabT) from Bacillus subtilis (strain 168).